We begin with the raw amino-acid sequence, 436 residues long: Tol-Pal system protein TolB (436 aa).

An N-terminal signal peptide occupies residues 1–28 (MEMLRRNFFRLLMVLVAGCGLIASPAKA).

Belongs to the TolB family. The Tol-Pal system is composed of five core proteins: the inner membrane proteins TolA, TolQ and TolR, the periplasmic protein TolB and the outer membrane protein Pal. They form a network linking the inner and outer membranes and the peptidoglycan layer.

Its subcellular location is the periplasm. Its function is as follows. Part of the Tol-Pal system, which plays a role in outer membrane invagination during cell division and is important for maintaining outer membrane integrity. The chain is Tol-Pal system protein TolB from Sinorhizobium medicae (strain WSM419) (Ensifer medicae).